Consider the following 164-residue polypeptide: Cyclic pyranopterin monophosphate synthase (164 aa).

Residues 73-75 and 111-112 each bind substrate; these read LCH and ME. Aspartate 126 is an active-site residue.

The protein belongs to the MoaC family. In terms of assembly, homohexamer; trimer of dimers.

The enzyme catalyses (8S)-3',8-cyclo-7,8-dihydroguanosine 5'-triphosphate = cyclic pyranopterin phosphate + diphosphate. It functions in the pathway cofactor biosynthesis; molybdopterin biosynthesis. Functionally, catalyzes the conversion of (8S)-3',8-cyclo-7,8-dihydroguanosine 5'-triphosphate to cyclic pyranopterin monophosphate (cPMP). The sequence is that of Cyclic pyranopterin monophosphate synthase from Herpetosiphon aurantiacus (strain ATCC 23779 / DSM 785 / 114-95).